A 509-amino-acid polypeptide reads, in one-letter code: MERVRIFDTTLRDGEQSPGVSLNAMEKLQIARQLQKLGVDVIEAGFPITSPGDKEAVSLIAREVKGVVVAALARASALDIETAWDAIKDAESPRIHTFIATSDIHLKYKLKMDRETVVERAVAAVKLAKKFTADVEFSAEDASRSDLDFLCRVVEAAVKAGATTINIPDTVGYAEPEEFGEFICKILEKVPVMDRAVLSVHCHDDLGLAVANSLAAIKNGARQVECTINGIGERAGNCSLEEIVMALYTRKDVLPFYTGIKTEEIYRTSKLVSNLTGMPVQPNKAIVGKNAFSHESGIHQDGVLKERTTYEIMNPRLVGIPESRLVLGKHSGRHALKERLLELGYELTEEQLNEAFVKFKALADKKKEVTDQDLEAMMEEEIRKVPETYTLDYFHISTGSTIIPTATVGLIKEGEKLEDAATGDGPVDAIYKAINKITGLTPVLEQYSINAVTSGEDALGEVVVKLKNGLGKIVTGRGVSTDILEASAKAYLNGINKLLFDYQAKGEKQ.

Positions 4-266 (VRIFDTTLRD…YTGIKTEEIY (263 aa)) constitute a Pyruvate carboxyltransferase domain. Asp-13, His-201, His-203, and Asn-237 together coordinate Mn(2+). A regulatory domain region spans residues 390–509 (TLDYFHISTG…FDYQAKGEKQ (120 aa)).

Belongs to the alpha-IPM synthase/homocitrate synthase family. LeuA type 1 subfamily. As to quaternary structure, homodimer. Mn(2+) serves as cofactor.

It localises to the cytoplasm. The enzyme catalyses 3-methyl-2-oxobutanoate + acetyl-CoA + H2O = (2S)-2-isopropylmalate + CoA + H(+). It participates in amino-acid biosynthesis; L-leucine biosynthesis; L-leucine from 3-methyl-2-oxobutanoate: step 1/4. In terms of biological role, catalyzes the condensation of the acetyl group of acetyl-CoA with 3-methyl-2-oxobutanoate (2-ketoisovalerate) to form 3-carboxy-3-hydroxy-4-methylpentanoate (2-isopropylmalate). The chain is 2-isopropylmalate synthase from Carboxydothermus hydrogenoformans (strain ATCC BAA-161 / DSM 6008 / Z-2901).